We begin with the raw amino-acid sequence, 328 residues long: Sialic acid-binding Ig-like lectin 15 (328 aa).

Residues 1–19 (MEKSIWLLACLAWVLPTGS) form the signal peptide. Residues 20-263 (FVRTKIDTTE…RFHGASGAST (244 aa)) are Extracellular-facing. Residues 40-158 (PAQRWSMQVP…DVHDRYESRH (119 aa)) form the Ig-like V-type domain. Cystine bridges form between C64-C142 and C95-C104. An N-acetylneuraminate-binding site is contributed by R143. The Ig-like C2-type domain maps to 168-251 (PRIVNISVLP…SLGRSEASVY (84 aa)). N172 is a glycosylation site (N-linked (GlcNAc...) asparagine). A disulfide bridge connects residues C187 and C237. The helical transmembrane segment at 264-284 (VALLLGALGFKALLLLGVLAA) threads the bilayer. Residues 285–328 (RAARRRPEHLDTPDTPPRSQAQESNYENLSQMNPRSPPATMCSP) are Cytoplasmic-facing. Positions 289-328 (RRPEHLDTPDTPPRSQAQESNYENLSQMNPRSPPATMCSP) are disordered. Residues 301–318 (PRSQAQESNYENLSQMNP) show a composition bias toward polar residues.

Belongs to the immunoglobulin superfamily. SIGLEC (sialic acid binding Ig-like lectin) family. In terms of assembly, interacts with TYROBP and HCST. In terms of tissue distribution, expressed in macrophage and/or dendritic cells of spleen and lymph nodes.

The protein localises to the membrane. Functionally, binds sialylated glycoproteins. In Homo sapiens (Human), this protein is Sialic acid-binding Ig-like lectin 15 (SIGLEC15).